Here is a 503-residue protein sequence, read N- to C-terminus: Medium/long-chain-fatty-acid--CoA ligase FadD17 (503 aa).

This sequence belongs to the ATP-dependent AMP-binding enzyme family.

It carries out the reaction a medium-chain fatty acid + ATP + CoA = a medium-chain fatty acyl-CoA + AMP + diphosphate. The catalysed reaction is a long-chain fatty acid + ATP + CoA = a long-chain fatty acyl-CoA + AMP + diphosphate. It functions in the pathway lipid metabolism; fatty acid biosynthesis. Functionally, catalyzes the activation of medium/long-chain fatty acids as acyl-coenzyme A (acyl-CoA), which are then transferred to the multifunctional polyketide synthase (PKS) type III for further chain extension. The polypeptide is Medium/long-chain-fatty-acid--CoA ligase FadD17 (fadD17) (Mycobacterium marinum (strain ATCC BAA-535 / M)).